Here is a 440-residue protein sequence, read N- to C-terminus: Probable D-serine dehydratase (440 aa).

Lys120 is modified (N6-(pyridoxal phosphate)lysine).

The protein belongs to the serine/threonine dehydratase family. DsdA subfamily. Pyridoxal 5'-phosphate is required as a cofactor.

It carries out the reaction D-serine = pyruvate + NH4(+). The polypeptide is Probable D-serine dehydratase (Shouchella clausii (strain KSM-K16) (Alkalihalobacillus clausii)).